Here is a 111-residue protein sequence, read N- to C-terminus: DNA-binding protein AF_2068 (111 aa).

It belongs to the PDCD5 family.

In Archaeoglobus fulgidus (strain ATCC 49558 / DSM 4304 / JCM 9628 / NBRC 100126 / VC-16), this protein is DNA-binding protein AF_2068.